Here is a 387-residue protein sequence, read N- to C-terminus: Lipid-A-disaccharide synthase (387 aa).

It belongs to the LpxB family.

It catalyses the reaction a lipid X + a UDP-2-N,3-O-bis[(3R)-3-hydroxyacyl]-alpha-D-glucosamine = a lipid A disaccharide + UDP + H(+). Its pathway is bacterial outer membrane biogenesis; LPS lipid A biosynthesis. Condensation of UDP-2,3-diacylglucosamine and 2,3-diacylglucosamine-1-phosphate to form lipid A disaccharide, a precursor of lipid A, a phosphorylated glycolipid that anchors the lipopolysaccharide to the outer membrane of the cell. This is Lipid-A-disaccharide synthase from Glaesserella parasuis serovar 5 (strain SH0165) (Haemophilus parasuis).